A 786-amino-acid polypeptide reads, in one-letter code: Endonuclease MutS2 (786 aa).

335 to 342 (GPNTGGKT) contacts ATP. Positions 711-786 (LDLRGERFEN…GLGVTVVELK (76 aa)) constitute a Smr domain.

This sequence belongs to the DNA mismatch repair MutS family. MutS2 subfamily. As to quaternary structure, homodimer. Binds to stalled ribosomes, contacting rRNA.

Endonuclease that is involved in the suppression of homologous recombination and thus may have a key role in the control of bacterial genetic diversity. In terms of biological role, acts as a ribosome collision sensor, splitting the ribosome into its 2 subunits. Detects stalled/collided 70S ribosomes which it binds and splits by an ATP-hydrolysis driven conformational change. Acts upstream of the ribosome quality control system (RQC), a ribosome-associated complex that mediates the extraction of incompletely synthesized nascent chains from stalled ribosomes and their subsequent degradation. Probably generates substrates for RQC. The chain is Endonuclease MutS2 from Bacillus cereus (strain ATCC 10987 / NRS 248).